Reading from the N-terminus, the 173-residue chain is N-alpha-acetyltransferase 20 (173 aa).

Residues 2-151 form the N-acetyltransferase domain; the sequence is TTIRRFVCDD…DALDMRKALP (150 aa).

The protein belongs to the acetyltransferase family. ARD1 subfamily.

In terms of biological role, seems to be involved in N-acetylation. The polypeptide is N-alpha-acetyltransferase 20 (nat5) (Dictyostelium discoideum (Social amoeba)).